The chain runs to 169 residues: Ureidoglycolate lyase (169 aa).

The protein belongs to the ureidoglycolate lyase family. In terms of assembly, homodimer. Ni(2+) serves as cofactor.

It carries out the reaction (S)-ureidoglycolate = urea + glyoxylate. It participates in nitrogen metabolism; (S)-allantoin degradation. Catalyzes the catabolism of the allantoin degradation intermediate (S)-ureidoglycolate, generating urea and glyoxylate. Involved in the utilization of allantoin as nitrogen source. The sequence is that of Ureidoglycolate lyase from Pseudomonas aeruginosa (strain LESB58).